The primary structure comprises 165 residues: Glycine cleavage system H protein, mitochondrial (165 aa).

The N-terminal 31 residues, 1–31 (MALRIWASSTAKALRLSSASRPHFSPLFRCF), are a transit peptide targeting the mitochondrion. Residues 55–137 (VATIGITDHA…YEDGWMIKVK (83 aa)) enclose the Lipoyl-binding domain. Residue Lys-96 is modified to N6-lipoyllysine.

It belongs to the GcvH family. As to quaternary structure, the glycine cleavage system is composed of four components that only loosely associate: the P protein (EC 1.4.4.2), the T protein (EC 2.1.2.10), the L protein (EC 1.8.1.4) and the lipoyl-bearing H protein. The cofactor is (R)-lipoate. As to expression, expressed in roots, stems and leaves.

The protein localises to the mitochondrion. Its function is as follows. The glycine cleavage system catalyzes the degradation of glycine. The H protein shuttles the methylamine group of glycine from the P protein to the T protein. The protein is Glycine cleavage system H protein, mitochondrial (GDCSH) of Flaveria trinervia (Clustered yellowtops).